Consider the following 213-residue polypeptide: Uridine kinase (213 aa).

15–22 (GASASGKS) provides a ligand contact to ATP.

The protein belongs to the uridine kinase family.

It localises to the cytoplasm. The catalysed reaction is uridine + ATP = UMP + ADP + H(+). It catalyses the reaction cytidine + ATP = CMP + ADP + H(+). It participates in pyrimidine metabolism; CTP biosynthesis via salvage pathway; CTP from cytidine: step 1/3. It functions in the pathway pyrimidine metabolism; UMP biosynthesis via salvage pathway; UMP from uridine: step 1/1. In Enterobacter sp. (strain 638), this protein is Uridine kinase.